The sequence spans 1625 residues: Nonribosomal peptide synthetase aclP (1625 aa).

The 77-residue stretch at 47–123 (TTMNPSSQLL…ALFTDLLSSE (77 aa)) folds into the Carrier 1 domain. S84 is modified (O-(pantetheine 4'-phosphoryl)serine). The segment at 127–157 (IPIPDPSDDSDDLSNPSSSTGGSPRVATPIS) is disordered. A condensation 1 region spans residues 286-567 (ASSQSTVIWA…KYFQRALQLL (282 aa)). Residues 614 to 997 (FESAVSRNPM…GRTDRQIKLR (384 aa)) are adenylation. One can recognise a Carrier 2 domain in the interval 1096–1171 (SPMEKLVGDA…HLAAAIDSGL (76 aa)). O-(pantetheine 4'-phosphoryl)serine is present on S1131. The tract at residues 1195 to 1585 (EWWHKYQINE…LQARIPLALS (391 aa)) is condensation 2.

It belongs to the NRP synthetase family.

It functions in the pathway mycotoxin biosynthesis. Its function is as follows. Nonribosomal peptide synthetase; part of the gene cluster that mediates the biosynthesis of aspirochlorine (or antibiotic A30641), an unusual halogenated spiro compound with distinctive antifungal properties due to selective inhibition of protein biosynthesis, and which is also active against bacteria, viruses, and murine tumor cells. The non-ribosomal peptide synthetase (NRPS) aclP is responsible the formation of the diketopiperazine (DKP) core from the condensation of 2 phenylalanine residues. One Phe residue is tailored into chlorotyrosine by hydroxylation and chlorination, whereas the second Phe undergoes an unprecedented C-C bond cleavage to be converted into glycine. After formation of the DKP, sulfur is incorporated into the DKP by conjugation with glutathione by aclG, followed by its stepwise degradation to the thiol by aclI, aclJ and aclK, and the dithiol oxidation by aclT. In addition, oxygenases (aclB, aclC, aclL and aclO) and O-methyltransferases (aclM and aclU) act as tailoring enzymes to produce the intermediate dechloroaspirochlorine. Ultimately, chlorination of dechloroaspirochlorine by the halogenase aclH is the last step in the aspirochlorine pathway. The protein is Nonribosomal peptide synthetase aclP of Aspergillus oryzae (strain ATCC 42149 / RIB 40) (Yellow koji mold).